The sequence spans 539 residues: Acrosin-binding protein (539 aa).

Residues 1–25 (MRQLAAGSLLSLLKVLLLPLAPAPA) form the signal peptide. The interval 26 to 106 (QDANSASTPG…ASWFESFCQF (81 aa)) is pro-ACR binding. A propeptide spans 26-269 (QDANSASTPG…NPFSFTPRVR (244 aa)) (removed in active form). The interval 186–259 (LGGQEQGQEH…PKFQSEFVSS (74 aa)) is disordered. Positions 192-211 (GQEHKQEHKQEQGQEHKQDE) are enriched in basic and acidic residues. Residues 212–238 (GQEQEEQEEEQEEEGKQEEGQGTEESL) show a composition bias toward acidic residues. The interval 315–423 (LPHVDALLVL…TQIGTLKSGR (109 aa)) is pro-ACR binding.

Binds specifically to the 55- and 53-kDa proacrosins and the 49-kDa acrosin intermediate, but is not capable of binding 43-kDa acrosin intermediate and 32-kDa mature acrosin. In terms of processing, the N-terminus is blocked. Synthesized as a 60-kDa precursor, the 35-kDa mature form is post-translationally produced by the removal of the N-terminal half of the precursor during sperm maturation in the testis and/or epididymis. Post-translationally, phosphorylated on Tyr residues in capacitated sperm. In terms of tissue distribution, specifically expressed in testis.

It is found in the secreted. Its subcellular location is the cytoplasmic vesicle. The protein localises to the secretory vesicle. It localises to the acrosome. In terms of biological role, acrosomal protein that maintains proacrosin (pro-ACR) as an enzymatically inactive zymogen in the acrosome. Involved also in the acrosome formation. The chain is Acrosin-binding protein from Sus scrofa (Pig).